A 340-amino-acid chain; its full sequence is MLGIRAMLVMLDYYWIQLITNNDTRSNNTDTIFVSLLTGANGVTRTAIGGLHSNYTNLTEAFRFTPANTTTNSSTEGNWSVTNLTESCINRGESYLTTIWLLNCADNNTYWYSGNAYNHTIDTCKNTVSGYLFFGMCQLWKDWVTNASHDTVRIQSLGNEIRCMLLPRQYTLNATVEWYNKSEGDVPEEFMDYVILTPLAVLTCGLQEAYILDKGRRYMYLFSVSCAGITGTVSIILVSLSLLILICYYRCGRLLICPRGFELLPEFTEEEEEKEKLLTYKDIEVQVPIRTRRLLVPWIRESKMWVLPPPLPPRPPHLIEFPPSPPPSPGPMHMVVCMPA.

Residues 1 to 25 form the signal peptide; that stretch reads MLGIRAMLVMLDYYWIQLITNNDTR. At 26 to 225 the chain is on the lumenal side; sequence SNNTDTIFVS…RRYMYLFSVS (200 aa). N27, N54, N57, N68, N72, N78, N83, N107, N118, N146, N173, and N180 each carry an N-linked (GlcNAc...) asparagine; by host glycan. The helical transmembrane segment at 226-246 threads the bilayer; sequence CAGITGTVSIILVSLSLLILI. Over 247 to 340 the chain is Cytoplasmic; sequence CYYRCGRLLI…PMHMVVCMPA (94 aa).

It belongs to the HHV-5 UL20 protein family.

Its subcellular location is the host endoplasmic reticulum membrane. This is an uncharacterized protein from Human cytomegalovirus (strain AD169) (HHV-5).